We begin with the raw amino-acid sequence, 180 residues long: Large ribosomal subunit protein uL5c (180 aa).

Belongs to the universal ribosomal protein uL5 family. Part of the 50S ribosomal subunit; contacts the 5S rRNA.

Its subcellular location is the plastid. It localises to the chloroplast. In terms of biological role, binds 5S rRNA, forms part of the central protuberance of the 50S subunit. The sequence is that of Large ribosomal subunit protein uL5c (rpl5) from Oltmannsiellopsis viridis (Marine flagellate).